We begin with the raw amino-acid sequence, 475 residues long: Ribulose bisphosphate carboxylase large chain (475 aa).

Positions 1–2 (MS) are excised as a propeptide. Pro-3 is modified (N-acetylproline). Lys-14 carries the post-translational modification N6,N6,N6-trimethyllysine. Asn-123 and Thr-173 together coordinate substrate. The active-site Proton acceptor is the Lys-175. Residue Lys-177 participates in substrate binding. 3 residues coordinate Mg(2+): Lys-201, Asp-203, and Glu-204. Lys-201 is modified (N6-carboxylysine). Catalysis depends on His-294, which acts as the Proton acceptor. The substrate site is built by Arg-295, His-327, and Ser-379.

Belongs to the RuBisCO large chain family. Type I subfamily. In terms of assembly, heterohexadecamer of 8 large chains and 8 small chains; disulfide-linked. The disulfide link is formed within the large subunit homodimers. Requires Mg(2+) as cofactor. Post-translationally, the disulfide bond which can form in the large chain dimeric partners within the hexadecamer appears to be associated with oxidative stress and protein turnover.

It is found in the plastid. It localises to the chloroplast. It catalyses the reaction 2 (2R)-3-phosphoglycerate + 2 H(+) = D-ribulose 1,5-bisphosphate + CO2 + H2O. The catalysed reaction is D-ribulose 1,5-bisphosphate + O2 = 2-phosphoglycolate + (2R)-3-phosphoglycerate + 2 H(+). Its function is as follows. RuBisCO catalyzes two reactions: the carboxylation of D-ribulose 1,5-bisphosphate, the primary event in carbon dioxide fixation, as well as the oxidative fragmentation of the pentose substrate in the photorespiration process. Both reactions occur simultaneously and in competition at the same active site. This is Ribulose bisphosphate carboxylase large chain from Magnolia macrophylla (Bigleaf magnolia).